The sequence spans 136 residues: Ribonuclease P protein component (136 aa).

The disordered stretch occupies residues 116-136; sequence RPQRAAAKGSAGTTQKGTPRA. A compositionally biased stretch (polar residues) spans 126–136; the sequence is AGTTQKGTPRA.

The protein belongs to the RnpA family. As to quaternary structure, consists of a catalytic RNA component (M1 or rnpB) and a protein subunit.

The catalysed reaction is Endonucleolytic cleavage of RNA, removing 5'-extranucleotides from tRNA precursor.. Its function is as follows. RNaseP catalyzes the removal of the 5'-leader sequence from pre-tRNA to produce the mature 5'-terminus. It can also cleave other RNA substrates such as 4.5S RNA. The protein component plays an auxiliary but essential role in vivo by binding to the 5'-leader sequence and broadening the substrate specificity of the ribozyme. In Pseudarthrobacter chlorophenolicus (strain ATCC 700700 / DSM 12829 / CIP 107037 / JCM 12360 / KCTC 9906 / NCIMB 13794 / A6) (Arthrobacter chlorophenolicus), this protein is Ribonuclease P protein component.